We begin with the raw amino-acid sequence, 300 residues long: Geranyl diphosphate 2-C-methyltransferase (300 aa).

A disordered region spans residues 1–24 (MAAASAPVPGPGGASSTARGRIPA).

It belongs to the geranyl diphosphate 2-C-methyltransferase family. Requires Mg(2+) as cofactor.

The enzyme catalyses (2E)-geranyl diphosphate + S-adenosyl-L-methionine = (E)-2-methylgeranyl diphosphate + S-adenosyl-L-homocysteine + H(+). In terms of biological role, catalyzes the SAM-dependent methylation of geranyl diphosphate (GPP) to yield (E)-2-methylgeranyl diphosphate (2-MeGPP). The protein is Geranyl diphosphate 2-C-methyltransferase (gdpmt) of Streptomyces lasalocidi (Streptomyces lasaliensis).